The sequence spans 589 residues: WD repeat-containing protein 26 homolog (589 aa).

Residues 1–57 (MGVVEDTEPPLKRAKRLADEPNGFSANSSVRGSSVNSNSLGDLMARPLPSQGDDETI) are disordered. Positions 25–39 (SANSSVRGSSVNSNS) are enriched in low complexity. In terms of domain architecture, LisH spans 64–96 (RKSEFVRIITRALYSLGYDKTGAMLEEESGISL). One can recognise a CTLH domain in the interval 97–154 (HNSTIKLFLQQVKDGKWDQSVKTLHRIGFPDEKAVKAASFLLLEQKFLEFLKVEKIAD). WD repeat units follow at residues 272 to 311 (SHTD…HISL), 317 to 358 (GHHK…HMYE), 360 to 398 (GGIS…KECW), 401 to 440 (QRTQ…ERLI), 442 to 480 (EEDM…KIVS), 484 to 526 (GHKR…LIVE), and 529 to 569 (GHAG…QQNQ).

In terms of assembly, interacts with RANBPM. In terms of tissue distribution, expressed in roots, leaves and flowers.

It localises to the cytoplasm. In terms of biological role, acts as a component involved in the crosstalk regulation between light, hormone and abiotic stress response. This is WD repeat-containing protein 26 homolog from Arabidopsis thaliana (Mouse-ear cress).